The primary structure comprises 336 residues: D-aspartate oxidase (336 aa).

FAD is bound by residues glutamate 34, lysine 35, threonine 41, serine 42, glycine 304, valine 308, and serine 309. The Microbody targeting signal signature appears at 334–336 (SKL).

Belongs to the DAMOX/DASOX family. In terms of assembly, monomer. The cofactor is FAD.

It localises to the peroxisome matrix. The catalysed reaction is D-aspartate + O2 + H2O = oxaloacetate + H2O2 + NH4(+). It catalyses the reaction D-glutamate + O2 + H2O = H2O2 + 2-oxoglutarate + NH4(+). Functionally, selectively catalyzes the oxidative deamination of acidic amino acids. Suppresses the level of D-aspartate in the brain, an amino acid that can act as an agonist for glutamate receptors. Protects the organism from the toxicity of D-amino acids. May also function in the intestine. In Octopus vulgaris (Common octopus), this protein is D-aspartate oxidase.